The primary structure comprises 364 residues: D-alanine--D-alanine ligase (364 aa).

The ATP-grasp domain occupies 146-352; it reads KLCAADAGVE…FDELISRLLL (207 aa). An ATP-binding site is contributed by 179 to 234; it reads TERFAFPVFVKPANLGSSVGISKVHNAAELRPALDKACALDAKVLVEETITGREVE. Mg(2+) contacts are provided by D305, E319, and N321.

Belongs to the D-alanine--D-alanine ligase family. It depends on Mg(2+) as a cofactor. Mn(2+) serves as cofactor.

The protein resides in the cytoplasm. The enzyme catalyses 2 D-alanine + ATP = D-alanyl-D-alanine + ADP + phosphate + H(+). It functions in the pathway cell wall biogenesis; peptidoglycan biosynthesis. In terms of biological role, cell wall formation. This Chlorobaculum parvum (strain DSM 263 / NCIMB 8327) (Chlorobium vibrioforme subsp. thiosulfatophilum) protein is D-alanine--D-alanine ligase.